The following is a 20-amino-acid chain: IVGGQEASPGSWPXQVGLFF.

One can recognise a Peptidase S1 domain in the interval 1 to 20; sequence IVGGQEASPGSWPXQVGLFF.

The protein belongs to the peptidase S1 family.

It catalyses the reaction Hydrolysis of proteins, with broad specificity for peptide bonds. Native collagen is cleaved about 75% of the length of the molecule from the N-terminus. Low activity on small molecule substrates of both trypsin and chymotrypsin.. This enzyme is a serine protease capable of degrading the native triple helix of collagen. In Paralithodes camtschaticus (Red king crab), this protein is Collagenolytic protease 28 kDa.